Consider the following 284-residue polypeptide: Undecaprenyl-diphosphatase 2 (284 aa).

Helical transmembrane passes span 6 to 26 (VIFILKSVIIAIVEGLTEFIP), 46 to 66 (FAEMFEVVIQLGAILAVVVLY), 94 to 114 (FGMNVIIGCIPFAIIGVLFYD), 119 to 139 (LFNLQSVIIGFIVGGILLLVV), 183 to 203 (IMGGWIAGLNSPTAAEFSFFL), 227 to 247 (TLWIALVVGFIVAFIVSIIVM), and 262 to 282 (FAVYRIIMGVVLAVLAFTNII).

This sequence belongs to the UppP family.

The protein resides in the cell membrane. The catalysed reaction is di-trans,octa-cis-undecaprenyl diphosphate + H2O = di-trans,octa-cis-undecaprenyl phosphate + phosphate + H(+). Catalyzes the dephosphorylation of undecaprenyl diphosphate (UPP). Confers resistance to bacitracin. The polypeptide is Undecaprenyl-diphosphatase 2 (Clostridioides difficile (strain 630) (Peptoclostridium difficile)).